A 214-amino-acid polypeptide reads, in one-letter code: A-type ATP synthase subunit D (214 aa).

Belongs to the V-ATPase D subunit family. In terms of assembly, has multiple subunits with at least A(3), B(3), C, D, E, F, H, I and proteolipid K(x).

The protein resides in the cell membrane. Component of the A-type ATP synthase that produces ATP from ADP in the presence of a proton gradient across the membrane. This chain is A-type ATP synthase subunit D, found in Pyrococcus abyssi (strain GE5 / Orsay).